The following is a 430-amino-acid chain: Probable sugar isomerase R00627 (430 aa).

Residues His-257, Asp-289, and Asp-291 each contribute to the Mn(2+) site.

Belongs to the rhamnose isomerase family. Mn(2+) serves as cofactor.

This is Probable sugar isomerase R00627 from Rhizobium meliloti (strain 1021) (Ensifer meliloti).